The sequence spans 96 residues: Complement inhibitor RaCI4 (96 aa).

The signal sequence occupies residues 1-24 (MSAFNIFALVVVVCALMINECCTS). Disulfide bonds link Cys37-Cys61, Cys42-Cys63, and Cys57-Cys78.

This sequence belongs to the RaCI family. As to expression, expressed in salivary glands.

It localises to the secreted. Complement inhibitor. Prevents complement-mediated C5 activation by binding to C5. Binds C5 at a different binding site than the other tick complement inhibitors OmCI and CirpT1, and the drug eculizumab. Inhibits complement in human and guinea pig but not in other species tested (rabbit, rat, mouse, and pig). In Hyalomma rufipes (Tick), this protein is Complement inhibitor RaCI4.